The primary structure comprises 342 residues: tRNA N6-adenosine threonylcarbamoyltransferase (342 aa).

Residues His-111 and His-115 each contribute to the Fe cation site. Residues 134-138 (LVSGG), Asp-167, Gly-180, and Asn-274 each bind substrate. Asp-302 is a Fe cation binding site.

It belongs to the KAE1 / TsaD family. Fe(2+) is required as a cofactor.

The protein resides in the cytoplasm. The catalysed reaction is L-threonylcarbamoyladenylate + adenosine(37) in tRNA = N(6)-L-threonylcarbamoyladenosine(37) in tRNA + AMP + H(+). In terms of biological role, required for the formation of a threonylcarbamoyl group on adenosine at position 37 (t(6)A37) in tRNAs that read codons beginning with adenine. Is involved in the transfer of the threonylcarbamoyl moiety of threonylcarbamoyl-AMP (TC-AMP) to the N6 group of A37, together with TsaE and TsaB. TsaD likely plays a direct catalytic role in this reaction. The polypeptide is tRNA N6-adenosine threonylcarbamoyltransferase (Herminiimonas arsenicoxydans).